The chain runs to 251 residues: Imidazole glycerol phosphate synthase subunit HisF (251 aa).

Catalysis depends on residues Asp-11 and Asp-130.

This sequence belongs to the HisA/HisF family. As to quaternary structure, heterodimer of HisH and HisF.

Its subcellular location is the cytoplasm. The enzyme catalyses 5-[(5-phospho-1-deoxy-D-ribulos-1-ylimino)methylamino]-1-(5-phospho-beta-D-ribosyl)imidazole-4-carboxamide + L-glutamine = D-erythro-1-(imidazol-4-yl)glycerol 3-phosphate + 5-amino-1-(5-phospho-beta-D-ribosyl)imidazole-4-carboxamide + L-glutamate + H(+). It participates in amino-acid biosynthesis; L-histidine biosynthesis; L-histidine from 5-phospho-alpha-D-ribose 1-diphosphate: step 5/9. Functionally, IGPS catalyzes the conversion of PRFAR and glutamine to IGP, AICAR and glutamate. The HisF subunit catalyzes the cyclization activity that produces IGP and AICAR from PRFAR using the ammonia provided by the HisH subunit. The chain is Imidazole glycerol phosphate synthase subunit HisF from Flavobacterium johnsoniae (strain ATCC 17061 / DSM 2064 / JCM 8514 / BCRC 14874 / CCUG 350202 / NBRC 14942 / NCIMB 11054 / UW101) (Cytophaga johnsonae).